Consider the following 294-residue polypeptide: Cyclin-dependent kinase 5 homolog (294 aa).

The Protein kinase domain occupies 4 to 286 (YDKMEKIGEG…AEAAMQHPYF (283 aa)). Residues 10–18 (IGEGTYGTV) and Lys-33 contribute to the ATP site. Thr-14 is subject to Phosphothreonine. Phosphotyrosine is present on Tyr-15. Catalysis depends on Asp-126, which acts as the Proton acceptor. Ser-159 carries the post-translational modification Phosphoserine.

This sequence belongs to the protein kinase superfamily. CMGC Ser/Thr protein kinase family. CDC2/CDKX subfamily. In terms of tissue distribution, abundantly expressed in all adult tissues. Lower levels found in larvae and early embryos. Barely detectable in late embryos.

It carries out the reaction L-seryl-[protein] + ATP = O-phospho-L-seryl-[protein] + ADP + H(+). The enzyme catalyses L-threonyl-[protein] + ATP = O-phospho-L-threonyl-[protein] + ADP + H(+). In terms of biological role, probably involved in the control of the cell cycle. Interacts with D1 and D3-type G1 cyclins. Possible regulator of neuronal differentiation and/or development. The protein is Cyclin-dependent kinase 5 homolog (Cdk5) of Drosophila melanogaster (Fruit fly).